Consider the following 1294-residue polypeptide: Leucine-rich repeat receptor protein kinase MSP1 (1294 aa).

Residues 1–22 (MVSNSFWLFILLVSFIPISAWA) form the signal peptide. 5 LRR repeats span residues 88-112 (FQSLVRLNFSGCGFSGELPEALGNL), 113-136 (QNLQYLDLSNNELTGPIPISLYNL), 138-160 (MLKEMVLDYNSLSGQLSPAIAQL), 161-184 (QHLTKLSISMNSISGSLPPDLGSL), and 186-207 (NLELLDIKMNTFNGSIPATFGN). N-linked (GlcNAc...) asparagine glycans are attached at residues Asn-198, Asn-207, and Asn-220. 23 LRR repeats span residues 232–256 (LTNLLTLDLSSNSFEGTIPREIGQL), 258–280 (NLELLILGKNDLTGRIPQEIGSL), 282–304 (QLKLLHLEECQFTGKIPWSISGL), 305–328 (SSLTELDISDNNFDAELPSSMGEL), 330–352 (NLTQLIAKNAGLSGNMPKELGNC), 353–376 (KKLTVINLSFNALIGPIPEEFADL), 378–400 (AIVSFFVEGNKLSGRVPDWIQKW), 401–422 (KNARSIRLGQNKFSGPLPVLPL), 423–446 (QHLLSFAAESNLLSGSIPSHICQA), 447–469 (NSLHSLLLHHNNLTGTIDEAFKG), 471–493 (TNLTELNLLDNHIHGEVPGYLAE), 494–517 (LPLVTLELSQNKFAGMLPAELWES), 519–541 (TLLEISLSNNEITGPIPESIGKL), 542–565 (SVLQRLHIDNNLLEGPIPQSVGDL), 566–589 (RNLTNLSLRGNRLSGIIPLALFNC), 591–613 (KLATLDLSYNNLTGNIPSAISHL), 614–637 (TLLDSLILSSNQLSGSIPAEICVG), 649–673 (LQHHGLLDLSYNQLTGQIPTSIKNC), 675–697 (MVMVLNLQGNLLNGTIPVELGEL), 698–721 (TNLTSINLSFNEFVGPMLPWSGPL), 722–745 (VQLQGLILSNNHLDGSIPAKIGQI), 746–770 (LPKIAVLDLSSNALTGTLPQSLLCN), and 772–794 (YLNHLDVSNNHLSGHIQFSCPDG). Residues Asn-330 and Asn-359 are each glycosylated (N-linked (GlcNAc...) asparagine). 2 N-linked (GlcNAc...) asparagine glycosylation sites follow: Asn-458 and Asn-472. N-linked (GlcNAc...) asparagine glycosylation is found at Asn-567, Asn-570, and Asn-601. Residues Asn-687, Asn-699, and Asn-704 are each glycosylated (N-linked (GlcNAc...) asparagine). N-linked (GlcNAc...) asparagine glycosylation is found at Asn-805, Asn-821, and Asn-832. LRR repeat units follow at residues 822-846 (FTQLSTLDIHNNSLTGRLPSALSDL) and 848-870 (SLNYLDLSSNNLYGAIPCGICNI). Residues 917 to 937 (ITICAFTFVIIIVLVLLAVYL) traverse the membrane as a helical segment. The region spanning 1002–1282 (FSKVHIIGDG…KGLKMTHGME (281 aa)) is the Protein kinase domain. Residues 1008-1016 (IGDGGFGTV) and Lys-1030 each bind ATP. The active-site Proton acceptor is the Asp-1129.

Belongs to the protein kinase superfamily. Ser/Thr protein kinase family. In terms of assembly, interacts with TDL1A. In terms of tissue distribution, expressed in anthers and ovules during meiosis.

The protein localises to the cell membrane. It catalyses the reaction L-seryl-[protein] + ATP = O-phospho-L-seryl-[protein] + ADP + H(+). The catalysed reaction is L-threonyl-[protein] + ATP = O-phospho-L-threonyl-[protein] + ADP + H(+). Receptor-like kinase that plays important roles in restricting the number of cells entering into male and female sporogenesis. Involved in cell specification during anther development and initiation of anther wall formation. The protein is Leucine-rich repeat receptor protein kinase MSP1 of Oryza sativa subsp. japonica (Rice).